Here is a 209-residue protein sequence, read N- to C-terminus: Dephospho-CoA kinase (209 aa).

The 197-residue stretch at 13 to 209 (RIGLTGGIAT…AIEKVVVAEN (197 aa)) folds into the DPCK domain. Residue 21–26 (ATGKST) coordinates ATP.

It belongs to the CoaE family.

It is found in the cytoplasm. It catalyses the reaction 3'-dephospho-CoA + ATP = ADP + CoA + H(+). The protein operates within cofactor biosynthesis; coenzyme A biosynthesis; CoA from (R)-pantothenate: step 5/5. Its function is as follows. Catalyzes the phosphorylation of the 3'-hydroxyl group of dephosphocoenzyme A to form coenzyme A. This Synechococcus elongatus (strain ATCC 33912 / PCC 7942 / FACHB-805) (Anacystis nidulans R2) protein is Dephospho-CoA kinase.